The sequence spans 375 residues: Adiponectin receptor protein 1 (375 aa).

Positions 1 to 60 are disordered; it reads MSSHKGSVVAQGNGAPASNREADTVELAELGPLLEEKGKRVIANPPKAEEEQTCPVPQEE. Residues 1 to 136 are Cytoplasmic-facing; sequence MSSHKGSVVA…SIFRIHTETG (136 aa). The chain crosses the membrane as a helical span at residues 137-157; that stretch reads NIWTHLLGFVLFLFLGILTML. Topologically, residues 158-170 are extracellular; that stretch reads RPNMYFMAPLQEK. Residues 171–191 form a helical membrane-spanning segment; sequence VVFGMFFLGAVLCLSFSWLFH. His-191 contributes to the Zn(2+) binding site. At 192-203 the chain is on the cytoplasmic side; the sequence is TVYCHSEKVSRT. The chain crosses the membrane as a helical span at residues 204–224; it reads FSKLDYSGIALLIMGSFVPWL. The Extracellular portion of the chain corresponds to 225–234; that stretch reads YYSFYCSPQP. The helical transmembrane segment at 235-255 threads the bilayer; that stretch reads RLIYLSIVCVLGISAIIVAQW. At 256–264 the chain is on the cytoplasmic side; the sequence is DRFATPKHR. Residues 265–285 traverse the membrane as a helical segment; that stretch reads QTRAGVFLGLGLSGVVPTMHF. Topologically, residues 286–298 are extracellular; that stretch reads TIAEGFVKATTVG. The chain crosses the membrane as a helical span at residues 299 to 319; sequence QMGWFFLMAVMYITGAGLYAA. The Cytoplasmic portion of the chain corresponds to 320 to 337; sequence RIPERFFPGKFDIWFQSH. The Zn(2+) site is built by His-337 and His-341. A helical membrane pass occupies residues 338–358; that stretch reads QIFHVLVVAAAFVHFYGVSNL. Residues 359–375 are Extracellular-facing; sequence QEFRYGLEGGCTDDTLL.

It belongs to the ADIPOR family. May form homooligomers and heterooligomers with ADIPOR2. Interacts with APPL2 (via BAR domain); hinders the accessibility of APPL1 to ADIPOR1; negatively regulates adiponectin signaling; ADIPOQ dissociates this interaction and facilitates the recruitment of APPL1 to ADIPOR1. Interacts with APPL1; ADIPOQ enhances this interaction; inhibites adiponectin-stimulated binding of APPL2 to ADIPOR1. Widely expressed. Highly expressed in heart and skeletal muscle. Expressed at intermediate level in brain, spleen, kidney, liver, placenta, lung and peripheral blood leukocytes. Weakly expressed in colon, thymus and small intestine.

It is found in the cell membrane. Receptor for ADIPOQ, an essential hormone secreted by adipocytes that regulates glucose and lipid metabolism. Required for normal glucose and fat homeostasis and for maintaining a normal body weight. ADIPOQ-binding activates a signaling cascade that leads to increased AMPK activity, and ultimately to increased fatty acid oxidation, increased glucose uptake and decreased gluconeogenesis. Has high affinity for globular adiponectin and low affinity for full-length adiponectin. The polypeptide is Adiponectin receptor protein 1 (Homo sapiens (Human)).